Consider the following 128-residue polypeptide: Large ribosomal subunit protein bL19 (128 aa).

This sequence belongs to the bacterial ribosomal protein bL19 family.

Functionally, this protein is located at the 30S-50S ribosomal subunit interface and may play a role in the structure and function of the aminoacyl-tRNA binding site. The protein is Large ribosomal subunit protein bL19 of Mesoplasma florum (strain ATCC 33453 / NBRC 100688 / NCTC 11704 / L1) (Acholeplasma florum).